The sequence spans 297 residues: Aspartate carbamoyltransferase catalytic subunit (297 aa).

Residues R49 and T50 each contribute to the carbamoyl phosphate site. L-aspartate is bound at residue K77. R99, H129, and Q132 together coordinate carbamoyl phosphate. L-aspartate-binding residues include R162 and R215. G256 and P257 together coordinate carbamoyl phosphate.

The protein belongs to the aspartate/ornithine carbamoyltransferase superfamily. ATCase family. As to quaternary structure, heterododecamer (2C3:3R2) of six catalytic PyrB chains organized as two trimers (C3), and six regulatory PyrI chains organized as three dimers (R2).

It carries out the reaction carbamoyl phosphate + L-aspartate = N-carbamoyl-L-aspartate + phosphate + H(+). Its pathway is pyrimidine metabolism; UMP biosynthesis via de novo pathway; (S)-dihydroorotate from bicarbonate: step 2/3. Its function is as follows. Catalyzes the condensation of carbamoyl phosphate and aspartate to form carbamoyl aspartate and inorganic phosphate, the committed step in the de novo pyrimidine nucleotide biosynthesis pathway. The chain is Aspartate carbamoyltransferase catalytic subunit from Legionella pneumophila subsp. pneumophila (strain Philadelphia 1 / ATCC 33152 / DSM 7513).